We begin with the raw amino-acid sequence, 415 residues long: Corticotropin-releasing factor receptor 1 (415 aa).

An N-terminal signal peptide occupies residues 1 to 23 (MGRRPQLRLVKALLLLGLNSISA). Residues 24 to 111 (SLQDQHCESL…CQEILSEGEK (88 aa)) are Extracellular-facing. Disulfide bonds link Cys-30–Cys-54, Cys-44–Cys-87, and Cys-68–Cys-102. N-linked (GlcNAc...) asparagine glycans are attached at residues Asn-38, Asn-45, Asn-51, Asn-78, Asn-90, and Asn-98. The segment at 99–108 (HSECQEILSE) is important for peptide agonist binding. The chain crosses the membrane as a helical span at residues 112-142 (SKAHYHIAVIINYLGHCISLAALLVAFVLFL). At 143 to 149 (RLRSIRC) the chain is on the cytoplasmic side. The chain crosses the membrane as a helical span at residues 150–174 (VRNIIHWNLISAFILRNATWFVVQL). Residues 175 to 189 (TMSPEVHQSNVGWCR) lie on the Extracellular side of the membrane. A disulfide bond links Cys-188 and Cys-258. The chain crosses the membrane as a helical span at residues 190–218 (LVTAAYNYFHVTNFFWMFGEGCYLHTAVV). Residues 219–225 (LTYSTDR) are Cytoplasmic-facing. A helical membrane pass occupies residues 226–253 (LRKWMFICIGWGVPFPIIVAWAIGKLYY). The Extracellular portion of the chain corresponds to 254-269 (DNEKCWFGKRPGVYTD). The helical transmembrane segment at 270 to 295 (YIYQGPMILVLLINFIFLFNIVRILM) threads the bilayer. Residues 280–290 (LLINFIFLFNI) form an important for antagonist binding region. Over 296-306 (TKLRASTTSET) the chain is Cytoplasmic. Ser-301 is modified (phosphoserine; by PKA). A helical membrane pass occupies residues 307–331 (IQYRKAVKATLVLLPLLGITYMLFF). The Extracellular segment spans residues 332–338 (VNPGEDE). The helical transmembrane segment at 339 to 368 (VSRVVFIYFNSFLESFQGFFVSVFYCFLNS) threads the bilayer. The Cytoplasmic segment spans residues 369 to 415 (EVRSAIRKRWHRWQDKHSIRARVARAMSIPTSPTRVSFHSIKQSTAV).

It belongs to the G-protein coupled receptor 2 family. As to quaternary structure, heterodimer; heterodimerizes with GPER1. Interacts (via N-terminal extracellular domain) with CRH and UCN. Interacts with DLG1; this inhibits endocytosis of CRHR1 after agonist binding. Post-translationally, C-terminal Ser or Thr residues may be phosphorylated. Phosphorylation at Ser-301 by PKA prevents maximal coupling to Gq-protein, and thereby negatively regulates downstream signaling.

Its subcellular location is the cell membrane. It localises to the endosome. Functionally, G-protein coupled receptor for CRH (corticotropin-releasing factor) and UCN (urocortin). Has high affinity for CRH and UCN. Ligand binding causes a conformation change that triggers signaling via guanine nucleotide-binding proteins (G proteins) and down-stream effectors, such as adenylate cyclase. Promotes the activation of adenylate cyclase, leading to increased intracellular cAMP levels. Inhibits the activity of the calcium channel CACNA1H. Required for normal embryonic development of the adrenal gland and for normal hormonal responses to stress. Plays a role in the response to anxiogenic stimuli. The sequence is that of Corticotropin-releasing factor receptor 1 (CRHR1) from Ovis aries (Sheep).